We begin with the raw amino-acid sequence, 277 residues long: Large ribosomal subunit protein uL2 (277 aa).

Disordered stretches follow at residues 35–58 (QPLP…GGGH) and 213–277 (WKGI…RKRK).

Belongs to the universal ribosomal protein uL2 family. Part of the 50S ribosomal subunit. Forms a bridge to the 30S subunit in the 70S ribosome.

Functionally, one of the primary rRNA binding proteins. Required for association of the 30S and 50S subunits to form the 70S ribosome, for tRNA binding and peptide bond formation. It has been suggested to have peptidyltransferase activity; this is somewhat controversial. Makes several contacts with the 16S rRNA in the 70S ribosome. The polypeptide is Large ribosomal subunit protein uL2 (Staphylococcus carnosus (strain TM300)).